The sequence spans 344 residues: Meiotic recombination protein DMC1 homolog (344 aa).

The segment at 1 to 22 (MMASLKAEETSQMQLVEREEND) is disordered. 133 to 140 (GEFRSGKT) serves as a coordination point for ATP. DsDNA is bound at residue Arg235. 5 residues coordinate ssDNA: Arg235, Phe238, Arg241, Arg247, and Arg315. DsDNA is bound by residues Arg241 and Arg247.

The protein belongs to the RecA family. DMC1 subfamily. As to quaternary structure, double stacked ring-shaped homooctamer. Interacts with BRCA2A and BRCA2B. In terms of tissue distribution, expressed in mitotic and/or meiotic tissues. Expressed in roots, leaves and anthers and carpels of young fower buds.

It is found in the nucleus. Its function is as follows. May participate in meiotic recombination, specifically in homologous strand assimilation, which is required for the resolution of meiotic double-strand breaks. Mediates interhomolog recombination during meiosis. This Arabidopsis thaliana (Mouse-ear cress) protein is Meiotic recombination protein DMC1 homolog.